The sequence spans 97 residues: RxLR effector protein PexRD21 (97 aa).

A signal peptide spans 1-21 (MRLSYILVVVIAVTLQACVCA). Positions 48–66 (RLLRGVKKRTAEREVQEER) match the RxLR-dEER motif.

Belongs to the RxLR effector family.

It is found in the secreted. The protein localises to the host cell membrane. Effector that is involved in host plant infection. Contributes to virulence during the early infection stage, by inhibiting plant defense responses induced by both PAMP-triggered immunity (PTI) and effector-triggered immunity (ETI). This Phytophthora infestans (strain T30-4) (Potato late blight agent) protein is RxLR effector protein PexRD21.